A 1403-amino-acid chain; its full sequence is MYRSSPFDLGSNITDFDAIRISLASPEKIRSWSHGEVTKPETINYRTFKPERDGLFCARIFGPVTDWECLCGKYKRMKHRGVICDKCGVEVTLSKVRRERLGHIELASPCSHVWFFKGLPSRIGHILDISLRDLESVLYFEAYVVVEPGDAPVKEREVIKDETKFRELDQQYRPTGFKALMGAEAIKELLKRVDAESLSVELREKMKNETSIQKRLKFAKRLKVAEAFRKSTNKPQWMILDVIPVIPPELRPLVPLDGGRFATSDLNDLYRRVINRNNRLKKLMDLHAPEVIVRNEKRMLQEAVDALFDNGRRGRVLRGANNRPLKSLSDTLKGKQGRFRQNLLGKRVDYSGRSVIVVGPELKLHQCGLPKKMALELFKPFIYHRLEQTGHCTTIKQAKELVEQQEPVVWDILEEVIKDHPVLLNRAPTLHRLGIQAFEPVLVEGKAIKIHPLVCTAFNADFDGDQMAVHIPLSPEAQIEASVLMLASHNILSPASGQPITVPTQDMVLGMYYLTKARPGSKGEGRAFANIEEVLLAKEMGEVETLTPIRLRYTGDVMDLTTAYDDQDVTHTEPVPFQRQYINTTVGRAILNDNLRRATAEMPYINGLLKKKGIGNLVNYVYLRFGLEITVQMLDQIKSLGFQYATRSGLSIGIDDMVISPNKAKVVKEAEQTVNSVQQQYLDGAITNGERYNKVVEIWSAITEKVADEMFGNMQQMDKAGEINPIYVMADSGARGSKQQIRQLSGMRGLMAKPSGEIIETPITANFREGLTVLEYFISTHGARKGLADTALKTADSGYLTRRLVDVAQDVIISEYDCGTVDGIYVSSIVESGEIIEPLRDRVIGRVSLEKIKDYEGNVVVDVNQEVTEDLANGIAAAGIERVKIRSVLTCESKRGVCALCYGRNLASGRLVELGEAVGVIAAQSIGEPGTQLTMRTFHIGGTASRVSEQSRLDAKNNGTARFHNLTVVRAKEGHLVVMNRNGAITVIDEKGREKERYAVVYGAKLRVEDGQQVKLGQVMVEWDPYTFAILTEIGGAVGFKDLHEGLTLHEEVDEVTGLSRHVVMDSPDEKRQPAIVIKGAKGTKRYLMPSRAHLMVLDGEEVFPGDVLAKIPRETTKTKDITGGLPRVVELFEARKPRETAVISEIDGTVKFGEVSKGQRKIYVVADDGTEREYSVPRGVHVNVQEGERIQAGEQLMDGPLNPHDILAVLGEKQLQSYLVNEIQEVYRLQGVNISDKHIETIVRQMMRWVKVEDVGDTNFLLEQQVDKFRFRAENEAAIASGGRPATGRPLMLGITKASLSTDSFISAASFQETTRVLTEASINGAVDHLRGLKENVIVGRLIPAGTGMEYYRNVALSPELEAQAQQVQEEVHQAYEEAERALELLRNEGEDETGNEELVAE.

4 residues coordinate Zn(2+): Cys69, Cys71, Cys84, and Cys87. Residues Asp461, Asp463, and Asp465 each contribute to the Mg(2+) site. Zn(2+)-binding residues include Cys818, Cys891, Cys898, and Cys901. Positions 1384–1403 (LELLRNEGEDETGNEELVAE) are disordered. A compositionally biased stretch (acidic residues) spans 1391–1403 (GEDETGNEELVAE).

Belongs to the RNA polymerase beta' chain family. The RNAP catalytic core consists of 2 alpha, 1 beta, 1 beta' and 1 omega subunit. When a sigma factor is associated with the core the holoenzyme is formed, which can initiate transcription. Mg(2+) serves as cofactor. Requires Zn(2+) as cofactor.

The enzyme catalyses RNA(n) + a ribonucleoside 5'-triphosphate = RNA(n+1) + diphosphate. Its function is as follows. DNA-dependent RNA polymerase catalyzes the transcription of DNA into RNA using the four ribonucleoside triphosphates as substrates. The sequence is that of DNA-directed RNA polymerase subunit beta' from Koribacter versatilis (strain Ellin345).